The following is a 460-amino-acid chain: Photosystem II CP43 reaction center protein (460 aa).

Residue Met-1 is a propeptide. The next 5 membrane-spanning stretches (helical) occupy residues 56–80, 121–142, 165–187, 242–262, and 278–299; these read LFET…PHLA, IVGP…RDKN, KALF…RFIT, RPFS…LSYS, and WYNN…ASQA. Glu-354 lines the [CaMn4O5] cluster pocket. The chain crosses the membrane as a helical span at residues 434–458; sequence RARAAAAGFEKGINRENEPVLSMRP.

The protein belongs to the PsbB/PsbC family. PsbC subfamily. In terms of assembly, PSII is composed of 1 copy each of membrane proteins PsbA, PsbB, PsbC, PsbD, PsbE, PsbF, PsbH, PsbI, PsbJ, PsbK, PsbL, PsbM, PsbT, PsbY, PsbZ, Psb30/Ycf12, at least 3 peripheral proteins of the oxygen-evolving complex and a large number of cofactors. It forms dimeric complexes. The cofactor is Binds multiple chlorophylls and provides some of the ligands for the Ca-4Mn-5O cluster of the oxygen-evolving complex. It may also provide a ligand for a Cl- that is required for oxygen evolution. PSII binds additional chlorophylls, carotenoids and specific lipids..

The protein resides in the plastid. It localises to the chloroplast thylakoid membrane. Its function is as follows. One of the components of the core complex of photosystem II (PSII). It binds chlorophyll and helps catalyze the primary light-induced photochemical processes of PSII. PSII is a light-driven water:plastoquinone oxidoreductase, using light energy to abstract electrons from H(2)O, generating O(2) and a proton gradient subsequently used for ATP formation. The chain is Photosystem II CP43 reaction center protein from Cyanidium caldarium (Red alga).